The following is a 102-amino-acid chain: Large ribosomal subunit protein uL24 (102 aa).

This sequence belongs to the universal ribosomal protein uL24 family. As to quaternary structure, part of the 50S ribosomal subunit.

One of two assembly initiator proteins, it binds directly to the 5'-end of the 23S rRNA, where it nucleates assembly of the 50S subunit. In terms of biological role, one of the proteins that surrounds the polypeptide exit tunnel on the outside of the subunit. The protein is Large ribosomal subunit protein uL24 of Alcanivorax borkumensis (strain ATCC 700651 / DSM 11573 / NCIMB 13689 / SK2).